The chain runs to 589 residues: Sentrin-specific protease 2 (589 aa).

Positions 28–31 (KRRR) match the Nuclear localization signal motif. S32 is subject to Phosphoserine. The short motif at 46–51 (PAKRPR) is the Nuclear localization signal element. The tract at residues 71–382 (GFPFQLTTKP…EKEISNALGH (312 aa)) is axin-binding. 2 disordered regions span residues 148–179 (SFGF…LMWK) and 191–210 (EESG…GVQK). Positions 317–332 (LEPDLSEEVSARLRLG) match the Nuclear export signal motif. A phosphoserine mark is found at S333 and S344. The tract at residues 395–559 (LRITRGDIQT…MFTCKYADYI (165 aa)) is protease. Catalysis depends on residues H478 and D495. C548 functions as the Nucleophile in the catalytic mechanism.

Belongs to the peptidase C48 family. In terms of assembly, binds to SUMO2 and SUMO3. Interacts with the C-terminal domain of NUP153 via its N-terminus. Interacts with MTA1. Polyubiquitinated; which leads to proteasomal degradation.

It localises to the nucleus. Its subcellular location is the nuclear pore complex. The protein resides in the nucleus membrane. It is found in the cytoplasm. Functionally, protease that catalyzes two essential functions in the SUMO pathway. The first is the hydrolysis of an alpha-linked peptide bond at the C-terminal end of the small ubiquitin-like modifier (SUMO) propeptides, SUMO1, SUMO2 and SUMO3 leading to the mature form of the proteins. The second is the deconjugation of SUMO1, SUMO2 and SUMO3 from targeted proteins, by cleaving an epsilon-linked peptide bond between the C-terminal glycine of the mature SUMO and the lysine epsilon-amino group of the target protein. May down-regulate CTNNB1 levels and thereby modulate the Wnt pathway. Deconjugates SUMO2 from MTA1. Plays a dynamic role in adipogenesis by desumoylating and promoting the stabilization of CEBPB. Acts as a regulator of the cGAS-STING pathway by catalyzing desumoylation of CGAS and STING1 during the late phase of viral infection. This is Sentrin-specific protease 2 (SENP2) from Pongo abelii (Sumatran orangutan).